The primary structure comprises 502 residues: Maturase K (502 aa).

Belongs to the intron maturase 2 family. MatK subfamily.

The protein resides in the plastid. It localises to the chloroplast. In terms of biological role, usually encoded in the trnK tRNA gene intron. Probably assists in splicing its own and other chloroplast group II introns. The protein is Maturase K of Brassica oleracea (Wild cabbage).